The sequence spans 399 residues: Dual specificity mitogen-activated protein kinase kinase 4 (399 aa).

The segment at Met1–Lys40 is disordered. Ala2 carries the N-acetylalanine modification. Residues Ser7–Gly22 are compositionally biased toward gly residues. The segment at Met37–Pro52 is d domain. An Asymmetric dimethylarginine; alternate modification is found at Arg58. Residue Arg58 is modified to Omega-N-methylarginine; alternate. Ser90 bears the Phosphoserine mark. The 266-residue stretch at Leu102–Ile367 folds into the Protein kinase domain. Residues Ile108 to Val116 and Lys131 each bind ATP. Asp229 (proton acceptor) is an active-site residue. Ser257 bears the Phosphoserine; by MAP3K mark. A Phosphothreonine; by MAP3K modification is found at Thr261. Residues His364–Gln387 form a DVD domain region.

Belongs to the protein kinase superfamily. STE Ser/Thr protein kinase family. MAP kinase kinase subfamily. Interacts with SPAG9. Interacts (via its D domain) with its substrates MAPK8/JNK1, MAPK9/JNK2, MAPK10/JNK3, MAPK11 and MAPK14. Interacts (via its DVD domain) with MAP3Ks activators like MAP3K1/MEKK1 and MAP3K11/MLK3. Interacts with ARRB1, ARRB2 and MAPK8IP3/JIP3. Post-translationally, activated by phosphorylation on Ser-257 and Thr-261 by MAP kinase kinase kinases (MAP3Ks). As to expression, abundant expression is seen in the skeletal muscle. It is also widely expressed in other tissues.

It localises to the cytoplasm. The protein localises to the nucleus. It catalyses the reaction L-seryl-[protein] + ATP = O-phospho-L-seryl-[protein] + ADP + H(+). The catalysed reaction is L-threonyl-[protein] + ATP = O-phospho-L-threonyl-[protein] + ADP + H(+). The enzyme catalyses L-tyrosyl-[protein] + ATP = O-phospho-L-tyrosyl-[protein] + ADP + H(+). With respect to regulation, activated in response to a variety of cellular stresses, including UV and gamma-irradiation, heat shock, hyperosmolarity, T-cell receptor stimulation, peroxide and inflammatory cytokines. Also activated by developmental cues. MAP2K4/MKK4 is activated by the majority of MKKKs, such as MAP3K5/ASK1, MAP3K1/MEKK1, MAP3K7/TAK1, MAP3K10/MLK2, MAP3K11/MLK3, MAP3K12/DLK and MAP3K13/LZK. Dual specificity protein kinase which acts as an essential component of the MAP kinase signal transduction pathway. Essential component of the stress-activated protein kinase/c-Jun N-terminal kinase (SAP/JNK) signaling pathway. With MAP2K7/MKK7, is the one of the only known kinase to directly activate the stress-activated protein kinase/c-Jun N-terminal kinases MAPK8/JNK1, MAPK9/JNK2 and MAPK10/JNK3. MAP2K4/MKK4 and MAP2K7/MKK7 both activate the JNKs by phosphorylation, but they differ in their preference for the phosphorylation site in the Thr-Pro-Tyr motif. MAP2K4 shows preference for phosphorylation of the Tyr residue and MAP2K7/MKK7 for the Thr residue. The phosphorylation of the Thr residue by MAP2K7/MKK7 seems to be the prerequisite for JNK activation at least in response to pro-inflammatory cytokines, while other stimuli activate both MAP2K4/MKK4 and MAP2K7/MKK7 which synergistically phosphorylate JNKs. MAP2K4 is required for maintaining peripheral lymphoid homeostasis. The MKK/JNK signaling pathway is also involved in mitochondrial death signaling pathway, including the release cytochrome c, leading to apoptosis. Whereas MAP2K7/MKK7 exclusively activates JNKs, MAP2K4/MKK4 additionally activates the p38 MAPKs MAPK11, MAPK12, MAPK13 and MAPK14. The protein is Dual specificity mitogen-activated protein kinase kinase 4 (MAP2K4) of Homo sapiens (Human).